Here is a 729-residue protein sequence, read N- to C-terminus: Kinesin-like protein KAR3 (729 aa).

Residues 1 to 48 are disordered; the sequence is MESLPRTPTKGRSTQHLSTPSPKNDILAMNGHKRRNTTTPPPKHTLLK. The globular stretch occupies residues 1-109; that stretch reads MESLPRTPTK…ENVNELNRTQ (109 aa). The span at 10 to 22 shows a compositional bias: polar residues; the sequence is KGRSTQHLSTPSP. The stretch at 110 to 357 forms a coiled coil; that stretch reads AILFEKKATL…LEEYIKDTEL (248 aa). ATP is bound by residues asparagine 386, arginine 388, arginine 392, glutamate 454, glycine 477, serine 478, glycine 479, lysine 480, threonine 481, phenylalanine 482, glutamate 554, lysine 579, and threonine 694. A Kinesin motor domain is found at 386 to 723; the sequence is NIRVYCRIRP…LRFASKVNST (338 aa).

It belongs to the TRAFAC class myosin-kinesin ATPase superfamily. Kinesin family. NCD subfamily. As to quaternary structure, interacts with CIK1; the interaction is direct. Interacts with VIK1; the interaction is direct.

It is found in the cytoplasm. Its subcellular location is the cytoskeleton. The protein localises to the microtubule organizing center. The protein resides in the spindle pole body. It localises to the nucleus. It is found in the chromosome. Its subcellular location is the spindle. The enzyme catalyses ATP + H2O = ADP + phosphate + H(+). The catalysed reaction is ATP + H2O + a kinesin associated with a microtubule at position (n) = ADP + phosphate + a kinesin associated with a microtubule at position (n-1, toward the minus end).. Minus end-directed microtubule (MT) motor involved in spindle midzone assembly, poleward transport of newly captured kinetochores along the lateral side of MTs, karyogamy (nuclear fusion) during mating, and with an essential function in meiosis I. Functions together with the accessory proteins CIK1 or VIK1. Drives the poleward transport of newly captured kinetochores along the lateral side of MTs, both during S-phase and during M-phase. To contribute to spindle midzone assembly during mitotic metaphase, the nuclear KAR3-CIK1 motor cross-links anti-parallel microtubules to align them on the spindle axis; as the motor travels polewards splayed microtubules are pulled into alignment. During the karyogamy (nuclear fusion) step of mating, KAR3-CIK1 cross-links antiparallel cytoplasmic microtubules emanating from the spindle pole bodies of mating partners; the motor activity of KAR3 creates the force that pulls the nuclei together by sliding cross-linked microtubules past one another. KAR3-CIK1 promotes microtubule shortening predominantly from the microtubule plus-end. Together with cytoplasmic VIK1, may act to stabilize microtubules. Requires accessory protein VIK1 for spindle pole body localization and to allow the CIN8 and KIP1 motors to generate outwardly directed spindle forces. Essential during meiosis I. The ATPase activity is stimulated by microtubule-binding. The sequence is that of Kinesin-like protein KAR3 (KAR3) from Saccharomyces cerevisiae (strain ATCC 204508 / S288c) (Baker's yeast).